A 352-amino-acid polypeptide reads, in one-letter code: Nicotinate-nucleotide--dimethylbenzimidazole phosphoribosyltransferase (352 aa).

Catalysis depends on Glu318, which acts as the Proton acceptor.

It belongs to the CobT family.

The catalysed reaction is 5,6-dimethylbenzimidazole + nicotinate beta-D-ribonucleotide = alpha-ribazole 5'-phosphate + nicotinate + H(+). It functions in the pathway nucleoside biosynthesis; alpha-ribazole biosynthesis; alpha-ribazole from 5,6-dimethylbenzimidazole: step 1/2. Its function is as follows. Catalyzes the synthesis of alpha-ribazole-5'-phosphate from nicotinate mononucleotide (NAMN) and 5,6-dimethylbenzimidazole (DMB). This Azotobacter vinelandii (strain DJ / ATCC BAA-1303) protein is Nicotinate-nucleotide--dimethylbenzimidazole phosphoribosyltransferase.